The chain runs to 343 residues: Uroporphyrinogen decarboxylase (343 aa).

Residues 23–27 (RQAGR), Asp-73, Tyr-151, Ser-206, and His-322 each bind substrate.

Belongs to the uroporphyrinogen decarboxylase family. Homodimer.

The protein resides in the cytoplasm. It catalyses the reaction uroporphyrinogen III + 4 H(+) = coproporphyrinogen III + 4 CO2. Its pathway is porphyrin-containing compound metabolism; protoporphyrin-IX biosynthesis; coproporphyrinogen-III from 5-aminolevulinate: step 4/4. In terms of biological role, catalyzes the decarboxylation of four acetate groups of uroporphyrinogen-III to yield coproporphyrinogen-III. In Granulibacter bethesdensis (strain ATCC BAA-1260 / CGDNIH1), this protein is Uroporphyrinogen decarboxylase.